Here is a 351-residue protein sequence, read N- to C-terminus: Transcription elongation factor A N-terminal and central domain-containing protein (351 aa).

Residues 5-82 form the TFIIS N-terminal domain; that stretch reads NQIAARASLI…SKWKAVYKQT (78 aa). 2 disordered regions span residues 86-119 and 144-169; these read ARNSPKLFPVRGNKEENSGPSHDPSQNETLGICS and LKPKEEHFGDGDPESTGKRSSELLDP. Residues 103–119 show a composition bias toward polar residues; that stretch reads SGPSHDPSQNETLGICS. Residues 145–165 show a composition bias toward basic and acidic residues; that stretch reads KPKEEHFGDGDPESTGKRSSE. In terms of domain architecture, TFIIS central spans 173–289; it reads MRTKCIELLY…EHYLPQVIDG (117 aa).

This chain is Transcription elongation factor A N-terminal and central domain-containing protein (TCEANC), found in Homo sapiens (Human).